Here is a 251-residue protein sequence, read N- to C-terminus: Ferritin-1, chloroplastic (251 aa).

A chloroplast-targeting transit peptide spans 1 to 45; it reads MLLKAAPAFALLNTQGENLSPLFSSSKSFSPKNGNRFVVSASKAT. Positions 46 to 78 are extension peptide (EP); that stretch reads NHKPLTGVVFEPFEELKKELMLVPAVPDTSLCR. The Ferritin-like diiron domain maps to 79–232; the sequence is QKYSDDCEAA…EYVAQLRRVG (154 aa). Glu96, Glu131, His134, Glu180, and Gln214 together coordinate Fe cation.

Belongs to the ferritin family. In terms of assembly, oligomer of 24 subunits. There are two types of subunits: L (light) chain and H (heavy) chain. The major chain can be light or heavy, depending on the species and tissue type. The functional molecule forms a roughly spherical shell with a diameter of 12 nm and contains a central cavity into which the insoluble mineral iron core is deposited.

It localises to the plastid. It is found in the chloroplast. The catalysed reaction is 4 Fe(2+) + O2 + 4 H(+) = 4 Fe(3+) + 2 H2O. Its function is as follows. Stores iron in a soluble, non-toxic, readily available form. Important for iron homeostasis. Has ferroxidase activity. Iron is taken up in the ferrous form and deposited as ferric hydroxides after oxidation. This is Ferritin-1, chloroplastic (FER1) from Nicotiana tabacum (Common tobacco).